We begin with the raw amino-acid sequence, 236 residues long: UPF0257 lipoprotein YnfC (236 aa).

The signal sequence occupies residues methionine 1–glycine 16. The N-palmitoyl cysteine moiety is linked to residue cysteine 17. Cysteine 17 carries the S-diacylglycerol cysteine lipid modification.

This sequence belongs to the UPF0257 family.

Its subcellular location is the cell membrane. The polypeptide is UPF0257 lipoprotein YnfC (Salmonella heidelberg (strain SL476)).